Reading from the N-terminus, the 183-residue chain is UPF0200 protein MmarC6_1392 (183 aa).

8-15 (GMPGSGKS) provides a ligand contact to ATP.

This sequence belongs to the UPF0200 family.

The polypeptide is UPF0200 protein MmarC6_1392 (Methanococcus maripaludis (strain C6 / ATCC BAA-1332)).